The following is a 377-amino-acid chain: Acetyltransferase ple2 (377 aa).

The signal sequence occupies residues 1-27 (MKPFSPELLVLSFILLVLSCAIRPAKG). The next 4 helical transmembrane spans lie at 29 to 49 (WILWVIIVALNTYLTMTTTGD), 56 to 76 (IANNLFVITLTATDYILLTDV), 176 to 196 (IAAWLLFTTNQVSILLTALSL), and 258 to 278 (PALYVQLYAAFFLSGVLHAIG).

The protein belongs to the wax synthase family.

It is found in the membrane. It participates in secondary metabolite biosynthesis; terpenoid biosynthesis. Functionally, acetyltransferase; part of the gene cluster that mediates the biosynthesis of pleuromutilin, a tricyclic diterpene showing antibacterial properties. The geranylgeranyl diphosphate (GGPP) synthase ple4 catalyzes the first step in pleuromutilin biosynthesis. GGPP is then substrate of the premutilin synthase (PS) ple3 to yield premutilin. Premutilin synthase is a bifunctional enzyme composed of the fusion of a class II diterpene cyclase (DTC) and a class I diterpene synthase (DTS), with the corresponding domains and active sites containing characteristic aspartate-rich motifs. GGPP is first converted to mutildienyl-diphosphate (MPP) at the class II DTC site. MPP is subsequently further cyclized at the class I DTS site, followed by a 1,5-hydride shift and addition of water prior to terminating deprotonation, to yield premutilin. The cytochrome P450 monooxygenases ple5 and ple6 hydroxylate premutilin at C-11 and C-3, respectively, producing 11-hydroxypremutilin and 3-hydroxypremutilin. The combination of the actions of both ple5 and ple6 leads to the production of 3,11-dihydroxypremutilin. The short chain dehydrogenase ple7 further converts 3,11-dihydroxypremutilin into mutilin. The acetyltransferase ple2 then acetylates mutilin to produce 14-O-acetylmutilin. Finally, the cytochrome P450 monooxygenase ple1 catalyzes hydroxylation on the alpha position of the acetyl side chain of 14-O-acetylmutilin to yield pleuromutilin. The protein is Acetyltransferase ple2 of Rhodocybe pseudopiperita (Clitopilus pseudopiperitus).